The chain runs to 273 residues: Large ribosomal subunit protein uL2 (273 aa).

A disordered region spans residues 228 to 273; sequence VDHPHGGGEGKTSGGRHPVTPWGFPTKGKKTRKNKRTSKFIVKKRK. Positions 254–273 are enriched in basic residues; sequence KGKKTRKNKRTSKFIVKKRK.

The protein belongs to the universal ribosomal protein uL2 family. In terms of assembly, part of the 50S ribosomal subunit. Forms a bridge to the 30S subunit in the 70S ribosome.

One of the primary rRNA binding proteins. Required for association of the 30S and 50S subunits to form the 70S ribosome, for tRNA binding and peptide bond formation. It has been suggested to have peptidyltransferase activity; this is somewhat controversial. Makes several contacts with the 16S rRNA in the 70S ribosome. This chain is Large ribosomal subunit protein uL2, found in Rickettsia rickettsii (strain Iowa).